The primary structure comprises 290 residues: 4-hydroxybenzoate octaprenyltransferase (290 aa).

A run of 6 helical transmembrane segments spans residues tryptophan 41 to methionine 61, tryptophan 89 to leucine 109, phenylalanine 133 to phenylalanine 153, aspartate 158 to tyrosine 178, phenylalanine 202 to isoleucine 224, and tryptophan 269 to glycine 289.

It belongs to the UbiA prenyltransferase family. Requires Mg(2+) as cofactor.

The protein localises to the cell inner membrane. The enzyme catalyses all-trans-octaprenyl diphosphate + 4-hydroxybenzoate = 4-hydroxy-3-(all-trans-octaprenyl)benzoate + diphosphate. The protein operates within cofactor biosynthesis; ubiquinone biosynthesis. Functionally, catalyzes the prenylation of para-hydroxybenzoate (PHB) with an all-trans polyprenyl group. Mediates the second step in the final reaction sequence of ubiquinone-8 (UQ-8) biosynthesis, which is the condensation of the polyisoprenoid side chain with PHB, generating the first membrane-bound Q intermediate 3-octaprenyl-4-hydroxybenzoate. The chain is 4-hydroxybenzoate octaprenyltransferase from Burkholderia ambifaria (strain ATCC BAA-244 / DSM 16087 / CCUG 44356 / LMG 19182 / AMMD) (Burkholderia cepacia (strain AMMD)).